We begin with the raw amino-acid sequence, 615 residues long: Albumin (615 aa).

The first 18 residues, 1–18, serve as a signal peptide directing secretion; that stretch reads MKWVTLISFIFLFSSATS. Positions 19-23 are excised as a propeptide; it reads RNLQR. 3 Albumin domains span residues 22-214, 215-407, and 408-605; these read QRFA…IVMR, EKAK…QLNQ, and HIKE…NLIV. H30 contacts Cu cation. 2 residues coordinate Ca(2+): E33 and D40. Disulfide bonds link C80-C89, C102-C118, C117-C128, C152-C197, C196-C205, C228-C274, and C273-C281. Ca(2+)-binding residues include E272, D277, E280, and D283. D277 contacts Zn(2+). 10 cysteine pairs are disulfide-bonded: C293–C307, C306–C317, C344–C389, C388–C397, C420–C466, C465–C476, C489–C505, C504–C515, C542–C587, and C586–C595. N500 carries an N-linked (GlcNAc...) asparagine glycan.

It belongs to the ALB/AFP/VDB family. Plasma.

Its subcellular location is the secreted. Functionally, binds water, Ca(2+), Na(+), K(+), fatty acids, hormones, bilirubin and drugs. Its main function is the regulation of the colloidal osmotic pressure of blood. The sequence is that of Albumin (ALB) from Gallus gallus (Chicken).